The following is a 320-amino-acid chain: ATP phosphoribosyltransferase (320 aa).

Belongs to the ATP phosphoribosyltransferase family. Long subfamily. It depends on Mg(2+) as a cofactor.

It localises to the cytoplasm. It carries out the reaction 1-(5-phospho-beta-D-ribosyl)-ATP + diphosphate = 5-phospho-alpha-D-ribose 1-diphosphate + ATP. It functions in the pathway amino-acid biosynthesis; L-histidine biosynthesis; L-histidine from 5-phospho-alpha-D-ribose 1-diphosphate: step 1/9. Feedback inhibited by histidine. In terms of biological role, catalyzes the condensation of ATP and 5-phosphoribose 1-diphosphate to form N'-(5'-phosphoribosyl)-ATP (PR-ATP). Has a crucial role in the pathway because the rate of histidine biosynthesis seems to be controlled primarily by regulation of HisG enzymatic activity. The chain is ATP phosphoribosyltransferase (hisG) from Caulobacter vibrioides (strain ATCC 19089 / CIP 103742 / CB 15) (Caulobacter crescentus).